The following is a 1088-amino-acid chain: Platelet-derived growth factor receptor alpha (1088 aa).

The N-terminal stretch at 1 to 23 is a signal peptide; that stretch reads MGTSQAFLVLSCLLTGPSLIVCQ. Ig-like C2-type domains lie at 24-112, 116-200, 201-305, 318-409, and 413-516; these read LLLP…SEIE, IYIY…FKTS, EFNV…KTVT, PTFG…FELS, and PASI…LKLV. The Extracellular segment spans residues 24–527; it reads LLLPSILPNE…PSLRSELTVA (504 aa). Cysteines 48 and 99 form a disulfide. N-linked (GlcNAc...) asparagine glycans are attached at residues Asn-75, Asn-102, and Asn-178. 2 disulfides stabilise this stretch: Cys-149–Cys-188 and Cys-234–Cys-289. Residues Asn-352, Asn-358, Asn-457, and Asn-467 are each glycosylated (N-linked (GlcNAc...) asparagine). A disulfide bridge links Cys-434 with Cys-500. The chain crosses the membrane as a helical span at residues 528–548; that stretch reads AAVLVLLVIVIVSLIVLVVIW. Residues 549-1088 are Cytoplasmic-facing; sequence KQKPRYEIRW…SSDLVEDSFL (540 aa). 2 positions are modified to phosphotyrosine; by autocatalysis: Tyr-571 and Tyr-573. The 362-residue stretch at 592 to 953 folds into the Protein kinase domain; it reads LVLGRILGSG…HLSEIVENLL (362 aa). ATP is bound by residues 598–606 and Lys-626; that span reads LGSGAFGKV. Residues Tyr-719, Tyr-730, Tyr-741, Tyr-753, Tyr-761, and Tyr-767 each carry the phosphotyrosine; by autocatalysis modification. The active-site Proton acceptor is the Asp-817. 3 positions are modified to phosphotyrosine; by autocatalysis: Tyr-848, Tyr-987, and Tyr-1017. The segment at 1017–1088 is disordered; it reads YIIPLPDIDP…SSDLVEDSFL (72 aa). Residues 1040–1058 show a composition bias toward polar residues; the sequence is SSQTSEESAIETGSSSSTF. Residues 1064-1088 show a composition bias toward acidic residues; the sequence is ETIEDIDMMDDIGIDSSDLVEDSFL.

The protein belongs to the protein kinase superfamily. Tyr protein kinase family. CSF-1/PDGF receptor subfamily. Interacts with homodimeric PDGFA, PDGFB and PDGFC, and with heterodimers formed by PDGFA and PDGFB. Monomer in the absence of bound ligand. Interaction with dimeric PDGFA, PDGFB and/or PDGFC leads to receptor dimerization, where both PDGFRA homodimers and heterodimers with PDGFRB are observed. Interacts (tyrosine phosphorylated) with SHB (via SH2 domain). Interacts (tyrosine phosphorylated) with SHF (via SH2 domain). Interacts (tyrosine phosphorylated) with SRC (via SH2 domain). Interacts (tyrosine phosphorylated) with PIK3R1. Interacts (tyrosine phosphorylated) with PLCG1 (via SH2 domain). Interacts (tyrosine phosphorylated) with CRK, GRB2 and GRB7. Interacts with CD248; this interaction promotes PDGF receptor signaling pathway. Ubiquitinated, leading to its internalization and degradation. Post-translationally, autophosphorylated on tyrosine residues upon ligand binding. Autophosphorylation occurs in trans, i.e. one subunit of the dimeric receptor phosphorylates tyrosine residues on the other subunit. Phosphorylation at Tyr-730 and Tyr-741 is important for interaction with PIK3R1. Phosphorylation at Tyr-719 and Tyr-753 is important for interaction with PTPN11. Phosphorylation at Tyr-761 is important for interaction with CRK. Phosphorylation at Tyr-571 and Tyr-573 is important for interaction with SRC and SRC family members. Phosphorylation at Tyr-987 and Tyr-1017 is important for interaction with PLCG1.

The protein localises to the cell membrane. Its subcellular location is the cell projection. It localises to the cilium. It is found in the golgi apparatus. The catalysed reaction is L-tyrosyl-[protein] + ATP = O-phospho-L-tyrosyl-[protein] + ADP + H(+). With respect to regulation, present in an inactive conformation in the absence of bound ligand. Binding of PDGFA and/or PDGFB leads to dimerization and activation by autophosphorylation on tyrosine residues. Inhibited by imatinib, nilotinib and sorafenib. Its function is as follows. Tyrosine-protein kinase that acts as a cell-surface receptor for PDGFA, PDGFB and PDGFC and plays an essential role in the regulation of embryonic development, cell proliferation, survival and chemotaxis. Depending on the context, promotes or inhibits cell proliferation and cell migration. Plays an important role in the differentiation of bone marrow-derived mesenchymal stem cells. Required for normal skeleton development and cephalic closure during embryonic development. Required for normal development of the mucosa lining the gastrointestinal tract, and for recruitment of mesenchymal cells and normal development of intestinal villi. Plays a role in cell migration and chemotaxis in wound healing. Plays a role in platelet activation, secretion of agonists from platelet granules, and in thrombin-induced platelet aggregation. Binding of its cognate ligands - homodimeric PDGFA, homodimeric PDGFB, heterodimers formed by PDGFA and PDGFB or homodimeric PDGFC -leads to the activation of several signaling cascades; the response depends on the nature of the bound ligand and is modulated by the formation of heterodimers between PDGFRA and PDGFRB. Phosphorylates PIK3R1, PLCG1, and PTPN11. Activation of PLCG1 leads to the production of the cellular signaling molecules diacylglycerol and inositol 1,4,5-trisphosphate, mobilization of cytosolic Ca(2+) and the activation of protein kinase C. Phosphorylates PIK3R1, the regulatory subunit of phosphatidylinositol 3-kinase, and thereby mediates activation of the AKT1 signaling pathway. Mediates activation of HRAS and of the MAP kinases MAPK1/ERK2 and/or MAPK3/ERK1. Promotes activation of STAT family members STAT1, STAT3 and STAT5A and/or STAT5B. Receptor signaling is down-regulated by protein phosphatases that dephosphorylate the receptor and its down-stream effectors, and by rapid internalization of the activated receptor. The polypeptide is Platelet-derived growth factor receptor alpha (Pdgfra) (Rattus norvegicus (Rat)).